Here is a 190-residue protein sequence, read N- to C-terminus: Syndecan-2-B (190 aa).

Residues 1–22 form the signal peptide; sequence MRNVWLIVPFALLAAFSGETWA. Residues 23-136 lie on the Extracellular side of the membrane; that stretch reads QADRDLYIDS…NLFHRTEVLA (114 aa). A disordered region spans residues 34–60; the sequence is ESSGNYPVDDDDYSSGSGSGIPAHDDD. S36, S48, S50, and S52 each carry an O-linked (Xyl...) (glycosaminoglycan) serine glycan. The helical transmembrane segment at 137-157 threads the bilayer; the sequence is AVIAGGGIGFLFAVFLILLLV. Topologically, residues 158–190 are cytoplasmic; it reads YRMRKKDEGSYDLGERKPSSAVYQKAPTKEFYA. The tract at residues 167-190 is disordered; that stretch reads SYDLGERKPSSAVYQKAPTKEFYA.

It belongs to the syndecan proteoglycan family. Post-translationally, O-glycosylated; contains both heparan sulfate and chondroitin sulfate.

The protein resides in the membrane. Functionally, cell surface proteoglycan. The chain is Syndecan-2-B (sdc2-b) from Xenopus laevis (African clawed frog).